The sequence spans 318 residues: ADP-L-glycero-D-manno-heptose-6-epimerase (318 aa).

NADP(+)-binding positions include 10 to 11 (FI), 31 to 32 (DD), K38, K53, and 79 to 83 (EGACS). Residue Y144 is the Proton acceptor of the active site. Position 148 (K148) interacts with NADP(+). Residue N173 participates in substrate binding. NADP(+)-binding residues include V174 and K182. The Proton acceptor role is filled by K182. Substrate is bound by residues S184, H191, 205-208 (FEGC), R218, and Y282.

This sequence belongs to the NAD(P)-dependent epimerase/dehydratase family. HldD subfamily. Homopentamer. Requires NADP(+) as cofactor.

It carries out the reaction ADP-D-glycero-beta-D-manno-heptose = ADP-L-glycero-beta-D-manno-heptose. It functions in the pathway nucleotide-sugar biosynthesis; ADP-L-glycero-beta-D-manno-heptose biosynthesis; ADP-L-glycero-beta-D-manno-heptose from D-glycero-beta-D-manno-heptose 7-phosphate: step 4/4. In terms of biological role, catalyzes the interconversion between ADP-D-glycero-beta-D-manno-heptose and ADP-L-glycero-beta-D-manno-heptose via an epimerization at carbon 6 of the heptose. This Aeromonas hydrophila subsp. hydrophila (strain ATCC 7966 / DSM 30187 / BCRC 13018 / CCUG 14551 / JCM 1027 / KCTC 2358 / NCIMB 9240 / NCTC 8049) protein is ADP-L-glycero-D-manno-heptose-6-epimerase.